A 374-amino-acid polypeptide reads, in one-letter code: tRNA-specific 2-thiouridylase MnmA (374 aa).

Residues 12-19 (GMSGGVDS) and Met38 contribute to the ATP site. An interaction with target base in tRNA region spans residues 98–100 (NPD). Cys103 acts as the Nucleophile in catalysis. Cys103 and Cys202 form a disulfide bridge. ATP is bound at residue Gly128. Positions 152–154 (KDQ) are interaction with tRNA. Residue Cys202 is the Cysteine persulfide intermediate of the active site. The tract at residues 316–317 (RY) is interaction with tRNA.

Belongs to the MnmA/TRMU family.

The protein localises to the cytoplasm. It carries out the reaction S-sulfanyl-L-cysteinyl-[protein] + uridine(34) in tRNA + AH2 + ATP = 2-thiouridine(34) in tRNA + L-cysteinyl-[protein] + A + AMP + diphosphate + H(+). Functionally, catalyzes the 2-thiolation of uridine at the wobble position (U34) of tRNA, leading to the formation of s(2)U34. In Vibrio vulnificus (strain CMCP6), this protein is tRNA-specific 2-thiouridylase MnmA.